A 145-amino-acid chain; its full sequence is MKQQKDASKPAHFFHQVIVIALVLFVSKIIESFMPIPMPASVIGLVLLFVLLCTGAVKLGEVEKVGTTLTNNIGLLFVPAGISVVNSLGVISQAPFLIIGLIIVSTILLLICTGYVTQIIMKVTSRSKGDKVTKKIKIEEAQAHD.

The next 4 helical transmembrane spans lie at 10 to 30 (PAHF…SKII), 33 to 53 (FMPI…VLLC), 72 to 92 (NIGL…GVIS), and 96 to 116 (FLII…TGYV).

This sequence belongs to the CidA/LrgA family. LrgA subfamily.

The protein resides in the cell membrane. Inhibits the expression or activity of extracellular murein hydrolases by interacting, possibly with LrgB, with the holin-like proteins CidA and/or CidB. The LrgAB and CidAB proteins may affect the proton motive force of the membrane. May be involved in programmed cell death (PCD), possibly triggering PCD in response to antibiotics and environmental stresses. This is Antiholin-like protein LrgA from Staphylococcus aureus (strain Mu3 / ATCC 700698).